The sequence spans 1313 residues: Angiotensin-converting enzyme (1313 aa).

An N-terminal signal peptide occupies residues 1-35; sequence MGAASGQRGRWPLSPPLLMLSLLLLLLLPPSPAPA. The Extracellular portion of the chain corresponds to 36–1265; the sequence is LDPGLQPGNF…LEPQQARVGQ (1230 aa). N-linked (GlcNAc...) asparagine glycans are attached at residues N44, N60, N80, N117, N152, and N166. Peptidase M2 domains follow at residues 46-630 and 649-1228; these read SADE…LGWP and ETDE…LGWP. C163 and C171 are joined by a disulfide. Y237 contacts chloride. N324 carries N-linked (GlcNAc...) asparagine glycosylation. A disulfide bridge connects residues C365 and C383. H396 is a Zn(2+) binding site. The active-site Proton acceptor 1 is the E397. 2 residues coordinate Zn(2+): H400 and E424. N-linked (GlcNAc...) asparagine glycosylation occurs at N515. Catalysis depends on H526, which acts as the Proton donor 1. Position 535 (R535) interacts with chloride. An intrachain disulfide couples C551 to C563. N683, N701, N720, and N766 each carry an N-linked (GlcNAc...) asparagine glycan. C763 and C769 are joined by a disulfide. 2 residues coordinate chloride: R797 and Y835. Residue N948 is glycosylated (N-linked (GlcNAc...) asparagine). A disulfide bond links C963 and C981. Position 994 (H994) interacts with Zn(2+). E995 serves as the catalytic Proton acceptor 2. Positions 998 and 1022 each coordinate Zn(2+). Residues W1096 and R1100 each coordinate chloride. Catalysis depends on H1124, which acts as the Proton donor 2. R1133 is a chloride binding site. C1149 and C1161 are oxidised to a cystine. A glycan (N-linked (GlcNAc...) asparagine) is linked at N1197. The tract at residues 1221-1262 is juxtamembrane stalk; the sequence is HGETLGWPEYTWTPNTARAEGSLPESSRVNFLGMYLEPQQAR. The helical transmembrane segment at 1266–1282 threads the bilayer; it reads WVLLFLGVALLVATVGL. Residues 1283–1313 lie on the Cytoplasmic side of the membrane; sequence AHRLYNIHNHHSLRRPHRGPQFGSEVELRHS. S1306 bears the Phosphoserine mark.

This sequence belongs to the peptidase M2 family. Monomer and homodimer; homodimerizes following binding to an inhibitor. Interacts with calmodulin (CALM1, CALM2 or CALM3); interaction takes place in the cytoplasmic region and regulates phosphorylation and proteolytic cleavage. The cofactor is Zn(2+). Chloride serves as cofactor. Produced following proteolytic cleavage by secretase enzymes that cleave the transmembrane form in the juxtamembrane stalk region upstream of the transmembrane region. Cleavage can take place at different sites of the juxtamembrane stalk region. Post-translationally, phosphorylated by CK2 on Ser-1306; which allows membrane retention. Phosphorylated on tyrosine residues on its extracellular part, promoting cleavage by secretase enzymes and formation of the soluble form (Angiotensin-converting enzyme, soluble form). In terms of tissue distribution, expressed in brain, kidney, lung, skeletal muscle and heart. As to expression, testis-specific isoform is expressed in spermatocytes, adult testis.

It is found in the cell membrane. It localises to the cytoplasm. The protein resides in the secreted. It carries out the reaction Release of a C-terminal dipeptide, oligopeptide-|-Xaa-Yaa, when Xaa is not Pro, and Yaa is neither Asp nor Glu. Thus, conversion of angiotensin I to angiotensin II, with increase in vasoconstrictor activity, but no action on angiotensin II.. It catalyses the reaction angiotensin I + H2O = L-histidyl-L-leucine + angiotensin II. The enzyme catalyses bradykinin + H2O = L-Phe-L-Arg + bradykinin(1-7). The catalysed reaction is substance P + H2O = substance P(1-9) + L-Leu-L-Met-NH2. It carries out the reaction substance P + H2O = substance P(1-8) + Gly-L-Leu-L-Met-NH2. It catalyses the reaction substance P + H2O = L-Phe-L-Phe-Gly-L-Leu-L-Met-NH2 + substance P(1-6). The enzyme catalyses neurotensin + H2O = neurotensin(1-11) + L-isoleucyl-L-leucine. The catalysed reaction is goralatide + H2O = N-acetyl-L-seryl-L-aspartate + L-lysyl-L-proline. It carries out the reaction Met-enkephalin + H2O = L-phenylalanyl-L-methionine + L-tyrosylglycylglycine. It catalyses the reaction Leu-enkephalin + H2O = L-tyrosylglycylglycine + L-phenylalanyl-L-leucine. The enzyme catalyses Met-enkephalin-Arg-Phe + H2O = L-arginyl-L-phenylalanine + Met-enkephalin. With respect to regulation, the dipeptidyl carboxypeptidase activity is strongly activated by chloride. The dipeptidyl carboxypeptidase activity is specifically inhibited by lisinopril, captopril and enalaprilat. Strongly inhibited by lisinopril and captopril. Its function is as follows. Dipeptidyl carboxypeptidase that removes dipeptides from the C-terminus of a variety of circulating hormones, such as angiotensin I, bradykinin or enkephalins, thereby playing a key role in the regulation of blood pressure, electrolyte homeostasis or synaptic plasticity. Composed of two similar catalytic domains, each possessing a functional active site, with different selectivity for substrates. Plays a major role in the angiotensin-renin system that regulates blood pressure and sodium retention by the kidney by converting angiotensin I to angiotensin II, resulting in an increase of the vasoconstrictor activity of angiotensin. Also able to inactivate bradykinin, a potent vasodilator, and therefore enhance the blood pressure response. Acts as a regulator of synaptic transmission by mediating cleavage of neuropeptide hormones, such as substance P, neurotensin or enkephalins. Catalyzes degradation of different enkephalin neuropeptides (Met-enkephalin, Leu-enkephalin, Met-enkephalin-Arg-Phe and possibly Met-enkephalin-Arg-Gly-Leu). Acts as a regulator of synaptic plasticity in the nucleus accumbens of the brain by mediating cleavage of Met-enkephalin-Arg-Phe, a strong ligand of Mu-type opioid receptor OPRM1, into Met-enkephalin. Met-enkephalin-Arg-Phe cleavage by ACE decreases activation of OPRM1, leading to long-term synaptic potentiation of glutamate release. Also acts as a regulator of hematopoietic stem cell differentiation by mediating degradation of hemoregulatory peptide N-acetyl-SDKP (AcSDKP). Acts as a regulator of cannabinoid signaling pathway by mediating degradation of hemopressin, an antagonist peptide of the cannabinoid receptor CNR1. Involved in amyloid-beta metabolism by catalyzing degradation of Amyloid-beta protein 40 and Amyloid-beta protein 42 peptides, thereby preventing plaque formation. Catalyzes cleavage of cholecystokinin (maturation of Cholecystokinin-8 and Cholecystokinin-5) and Gonadoliberin-1 (both maturation and degradation) hormones. Degradation of hemoregulatory peptide N-acetyl-SDKP (AcSDKP) and amyloid-beta proteins is mediated by the N-terminal catalytic domain, while angiotensin I and cholecystokinin cleavage is mediated by the C-terminal catalytic region. In terms of biological role, soluble form that is released in blood plasma and other body fluids following proteolytic cleavage in the juxtamembrane stalk region. Isoform produced by alternative promoter usage that is specifically expressed in spermatocytes and adult testis, and which is required for male fertility. In contrast to somatic isoforms, only contains one catalytic domain. Acts as a dipeptidyl carboxypeptidase that removes dipeptides from the C-terminus of substrates. The identity of substrates that are needed for male fertility is unknown. May also have a glycosidase activity which releases GPI-anchored proteins from the membrane by cleaving the mannose linkage in the GPI moiety. The GPIase activity was reported to be essential for the egg-binding ability of the sperm. This activity is however unclear and has been challenged by other groups, suggesting that it may be indirect. In Rattus norvegicus (Rat), this protein is Angiotensin-converting enzyme.